A 166-amino-acid chain; its full sequence is SKPSKSGKGKDDLRNEIDKLWREVNSLKEMQALQTVCLKGTKIHKKCYLASRGSKSYHAANEDCIAQGGTLSIPRSSDEGNSLRSYAKKSLVGARDFWIGVNDMTTEGKFVDVNGLPITYFNWDRSKPVGGTRENCVAASTSGQGKWSDDVCRSEKRYICEYLIPV.

Intrachain disulfides connect Cys-37–Cys-47, Cys-64–Cys-160, and Cys-136–Cys-152. Residues 43–161 form the C-type lectin domain; it reads IHKKCYLASR…CRSEKRYICE (119 aa).

The chain is Tetranectin-like protein from Carcharhinus perezii (Reef shark).